The primary structure comprises 315 residues: Homoserine kinase (315 aa).

Position 97–107 (97–107 (PPARGLGSSAT)) interacts with ATP.

It belongs to the GHMP kinase family. Homoserine kinase subfamily.

Its subcellular location is the cytoplasm. The enzyme catalyses L-homoserine + ATP = O-phospho-L-homoserine + ADP + H(+). It functions in the pathway amino-acid biosynthesis; L-threonine biosynthesis; L-threonine from L-aspartate: step 4/5. Functionally, catalyzes the ATP-dependent phosphorylation of L-homoserine to L-homoserine phosphate. This is Homoserine kinase from Prochlorococcus marinus (strain MIT 9515).